Consider the following 267-residue polypeptide: Methyl-coenzyme M reductase II subunit gamma (267 aa).

R123 provides a ligand contact to coenzyme M.

The protein belongs to the methyl-coenzyme M reductase gamma subunit family. In terms of assembly, MCR is a hexamer of two alpha, two beta, and two gamma chains, forming a dimer of heterotrimers. Coenzyme F430 serves as cofactor.

The enzyme catalyses coenzyme B + methyl-coenzyme M = methane + coenzyme M-coenzyme B heterodisulfide. Its pathway is one-carbon metabolism; methyl-coenzyme M reduction; methane from methyl-coenzyme M: step 1/1. Functionally, component of the methyl-coenzyme M reductase (MCR) I that catalyzes the reductive cleavage of methyl-coenzyme M (CoM-S-CH3 or 2-(methylthio)ethanesulfonate) using coenzyme B (CoB or 7-mercaptoheptanoylthreonine phosphate) as reductant which results in the production of methane and the mixed heterodisulfide of CoB and CoM (CoM-S-S-CoB). This is the final step in methanogenesis. This chain is Methyl-coenzyme M reductase II subunit gamma (mrtG), found in Methanothermus fervidus (strain ATCC 43054 / DSM 2088 / JCM 10308 / V24 S).